Reading from the N-terminus, the 171-residue chain is Protein phosphatase 1 regulatory subunit 1A (171 aa).

At M1 the chain carries N-acetylmethionine. The tract at residues 1–171 (MEQDNSPRKI…PLDSKGANSV (171 aa)) is disordered. The interval 9 to 12 (KIQF) is essential for activity. Residues 19–29 (PHLDPEAAEQI) are compositionally biased toward basic and acidic residues. T35 carries the phosphothreonine; by PKA modification. Residues 42 to 54 (TSDQSSPEIDEDR) are essential for activity. Phosphoserine occurs at positions 43, 46, 47, and 67. The segment covering 135–157 (KTAECIPKTHERGSKEPSTKEPS) has biased composition (basic and acidic residues). The interval 143-171 (THERGSKEPSTKEPSTHIPPLDSKGANSV) is interaction with PPP1R15A.

It belongs to the protein phosphatase inhibitor 1 family. Interacts with PPP1R15A. Phosphorylation of Thr-35 is required for activity.

Functionally, inhibitor of protein-phosphatase 1. This protein may be important in hormonal control of glycogen metabolism. Hormones that elevate intracellular cAMP increase I-1 activity in many tissues. I-1 activation may impose cAMP control over proteins that are not directly phosphorylated by PKA. Following a rise in intracellular calcium, I-1 is inactivated by calcineurin (or PP2B). Does not inhibit type-2 phosphatases. This Homo sapiens (Human) protein is Protein phosphatase 1 regulatory subunit 1A (PPP1R1A).